A 592-amino-acid chain; its full sequence is BTB/POZ domain-containing protein At5g03250 (592 aa).

One can recognise a BTB domain in the interval 28 to 98; the sequence is SDVTIEVGDM…CYGVKIELTA (71 aa). The 286-residue stretch at 217–502 folds into the NPH3 domain; it reads DWWFDDASFL…VQVLFFEQLR (286 aa). Position 443 is a phosphotyrosine (Y443).

Belongs to the NPH3 family.

The protein operates within protein modification; protein ubiquitination. May act as a substrate-specific adapter of an E3 ubiquitin-protein ligase complex (CUL3-RBX1-BTB) which mediates the ubiquitination and subsequent proteasomal degradation of target proteins. The polypeptide is BTB/POZ domain-containing protein At5g03250 (Arabidopsis thaliana (Mouse-ear cress)).